The following is a 219-amino-acid chain: tRNA (guanine-N(7)-)-methyltransferase (219 aa).

Glutamate 43, aspartate 68, glutamate 101, and asparagine 124 together coordinate S-adenosyl-L-methionine. Lysine 128 and aspartate 160 together coordinate substrate.

Belongs to the class I-like SAM-binding methyltransferase superfamily. TrmB family.

It carries out the reaction guanosine(46) in tRNA + S-adenosyl-L-methionine = N(7)-methylguanosine(46) in tRNA + S-adenosyl-L-homocysteine. The protein operates within tRNA modification; N(7)-methylguanine-tRNA biosynthesis. Functionally, catalyzes the formation of N(7)-methylguanine at position 46 (m7G46) in tRNA. This Clostridium beijerinckii (strain ATCC 51743 / NCIMB 8052) (Clostridium acetobutylicum) protein is tRNA (guanine-N(7)-)-methyltransferase.